A 754-amino-acid chain; its full sequence is MAPRKNAKGGGGNSSSSSSGSPTGCTSGGSSSPGARRETKQGGLKNGRKGGLSGSSFFTWFMVIALLGVWTSVAVVWFDLVDYEEVLAKAKDFRYNLSEVLQGKLGIYDADGDGDFDVDDAKVLLGLKEKPAPKPTVPPEEADMYPWLEDQVLESPGRQNIEDEVYEQVQSLDETVYSEPGENLPQEPEGPAEELQPDDHVFVGSDADDRYEPMGTGAVHEETEDSYHIEETASPAYSQDMEDMMYEQENPDSSEPVVVDDAERTYQETDDVTYRDYDEQDHAVDNSNTILEEPHMPPAEEQQEVPPETNKKADEPGKKGKVKKKKPKLLNKFDKTIKAELDAAEKLRKRGKIEEAVNAFEELVRKYPQSPGARYGKAQCEDDLAEKRRSNEILRRAIETYQEAASLPDAPTDLVKLSLKRRSDRQQFLGHMRGSLLTLQKLVQLFPDDTALKNDLGVGYLLIGDNDSAKKVYEEVLSVTPNDGFAKVHYGFILKAQNKIAESIPYLKEGIESGDPGTDDGRFYFHLGDAMQRVGNKEAYRWYELGHQRGHFASVWQRSLYNVQGLKAQPWWTPKETGYTELVKSLERNWKLIRDEGLAAMDRTHGLFLPEDENLREKGDWSQFTLWQQGRKNENACKGAPKTCSLLDKFPETTGCRRGQIKYSIMHPGTHVWPHTGPTNCRLRMHLGLVIPKEGCKIRCANETRTWEEGKVLIFDDSFEHEVWQDAASFRLIFIVDVWHPELTPHQRRSLPAI.

The tract at residues 1-48 (MAPRKNAKGGGGNSSSSSSGSPTGCTSGGSSSPGARRETKQGGLKNGR) is disordered. Residues 1-56 (MAPRKNAKGGGGNSSSSSSGSPTGCTSGGSSSPGARRETKQGGLKNGRKGGLSGSS) are Cytoplasmic-facing. Positions 14-34 (SSSSSSGSPTGCTSGGSSSPG) are enriched in low complexity. Ser15 is subject to Phosphoserine. Residues 57–77 (FFTWFMVIALLGVWTSVAVVW) form a helical; Signal-anchor for type II membrane protein membrane-spanning segment. Over 78–754 (FDLVDYEEVL…PHQRRSLPAI (677 aa)) the chain is Lumenal. Residue Asn96 is glycosylated (N-linked (GlcNAc...) asparagine). Ca(2+) is bound by residues Asp109, Asp111, Asp113, Asp115, and Asp120. Disordered stretches follow at residues 176–197 (VYSEPGENLPQEPEGPAEELQP) and 247–326 (EQEN…KKKK). 2 stretches are compositionally biased toward basic and acidic residues: residues 261 to 284 (DAERTYQETDDVTYRDYDEQDHAV) and 309 to 318 (TNKKADEPGK). TPR repeat units follow at residues 337-370 (IKAELDAAEKLRKRGKIEEAVNAFEELVRKYPQS), 378-411 (AQCEDDLAEKRRSNEILRRAIETYQEAASLPDAP), 450-483 (TALKNDLGVGYLLIGDNDSAKKVYEEVLSVTPND), 485-517 (FAKVHYGFILKAQNKIAESIPYLKEGIESGDPG), and 521-553 (GRFYFHLGDAMQRVGNKEAYRWYELGHQRGHFA). The N-linked (GlcNAc...) asparagine glycan is linked to Asn466. 2-oxoglutarate is bound at residue Trp621. Cysteines 637 and 644 form a disulfide. Residue Ser664 participates in 2-oxoglutarate binding. His675 is a Fe cation binding site. A 2-oxoglutarate-binding site is contributed by 684-686 (RMH). N-linked (GlcNAc...) asparagine glycosylation occurs at Asn702. His721 is a binding site for Fe cation. Position 731 (Arg731) interacts with 2-oxoglutarate.

It belongs to the aspartyl/asparaginyl beta-hydroxylase family. Monomer. Fe cation serves as cofactor. In terms of processing, might be processed to the 56 kDa (AA 289-754) or 52 kDa (AA 311-754) forms in the lumen of the endoplasmic reticulum.

The protein localises to the endoplasmic reticulum membrane. It catalyses the reaction L-aspartyl-[protein] + 2-oxoglutarate + O2 = 3-hydroxy-L-aspartyl-[protein] + succinate + CO2. In terms of biological role, specifically hydroxylates an Asp or Asn residue in certain epidermal growth factor-like (EGF) domains of a number of proteins. The polypeptide is Aspartyl/asparaginyl beta-hydroxylase (ASPH) (Bos taurus (Bovine)).